Consider the following 217-residue polypeptide: Adenylate kinase (217 aa).

10–15 (GAGKGT) contributes to the ATP binding site. The segment at 30–59 (STGDIFRSNVSQGTPLGVQAKRYMDAGELV) is NMP. AMP-binding positions include threonine 31, arginine 36, 57-59 (ELV), 85-88 (GFPR), and glutamine 92. Residues 126–163 (GRRTCRGCGKVWHVEFDAPSQEGRCDRCGAELFQRDDD) are LID. Arginine 127 is a binding site for ATP. Positions 130, 133, 150, and 153 each coordinate Zn(2+). Residues arginine 160 and arginine 171 each contribute to the AMP site. Glycine 199 contacts ATP.

Belongs to the adenylate kinase family. As to quaternary structure, monomer.

It localises to the cytoplasm. The enzyme catalyses AMP + ATP = 2 ADP. The protein operates within purine metabolism; AMP biosynthesis via salvage pathway; AMP from ADP: step 1/1. Functionally, catalyzes the reversible transfer of the terminal phosphate group between ATP and AMP. Plays an important role in cellular energy homeostasis and in adenine nucleotide metabolism. This chain is Adenylate kinase, found in Salinispora tropica (strain ATCC BAA-916 / DSM 44818 / JCM 13857 / NBRC 105044 / CNB-440).